The primary structure comprises 185 residues: Ribosome-recycling factor (185 aa).

The protein belongs to the RRF family.

Its subcellular location is the cytoplasm. Its function is as follows. Responsible for the release of ribosomes from messenger RNA at the termination of protein biosynthesis. May increase the efficiency of translation by recycling ribosomes from one round of translation to another. The polypeptide is Ribosome-recycling factor (Tolumonas auensis (strain DSM 9187 / NBRC 110442 / TA 4)).